Here is a 583-residue protein sequence, read N- to C-terminus: Isocitrate dehydrogenase kinase/phosphatase (583 aa).

Residues 315–321 (APGIRGM) and Lys336 each bind ATP. The active site involves Asp371.

Belongs to the AceK family.

The protein localises to the cytoplasm. It carries out the reaction L-seryl-[isocitrate dehydrogenase] + ATP = O-phospho-L-seryl-[isocitrate dehydrogenase] + ADP + H(+). Bifunctional enzyme which can phosphorylate or dephosphorylate isocitrate dehydrogenase (IDH) on a specific serine residue. This is a regulatory mechanism which enables bacteria to bypass the Krebs cycle via the glyoxylate shunt in response to the source of carbon. When bacteria are grown on glucose, IDH is fully active and unphosphorylated, but when grown on acetate or ethanol, the activity of IDH declines drastically concomitant with its phosphorylation. The sequence is that of Isocitrate dehydrogenase kinase/phosphatase from Salmonella agona (strain SL483).